The following is a 217-amino-acid chain: Adenylate kinase (217 aa).

10–15 (GAGKGT) contacts ATP. An NMP region spans residues 30–59 (STGDMFRAAMKEETPLGLEAKSYIDKGELV). AMP contacts are provided by residues T31, R36, 57–59 (ELV), 85–88 (GFPR), and Q92. The segment at 126–163 (GRRICSVCGTTYHLVFNPPKTPGVCDKDGGDLYQRADD) is LID. R127 lines the ATP pocket. C130 and C133 together coordinate Zn(2+). Residue 136–137 (TY) participates in ATP binding. Residues C150 and D153 each coordinate Zn(2+). The AMP site is built by R160 and R171. Residue Q199 participates in ATP binding.

The protein belongs to the adenylate kinase family. As to quaternary structure, monomer.

It is found in the cytoplasm. It carries out the reaction AMP + ATP = 2 ADP. The protein operates within purine metabolism; AMP biosynthesis via salvage pathway; AMP from ADP: step 1/1. Catalyzes the reversible transfer of the terminal phosphate group between ATP and AMP. Plays an important role in cellular energy homeostasis and in adenine nucleotide metabolism. The sequence is that of Adenylate kinase from Bacillus velezensis (strain DSM 23117 / BGSC 10A6 / LMG 26770 / FZB42) (Bacillus amyloliquefaciens subsp. plantarum).